Reading from the N-terminus, the 310-residue chain is ADP-L-glycero-D-manno-heptose-6-epimerase (310 aa).

NADP(+)-binding positions include 10–11 (FI), 31–32 (DN), Lys38, Lys53, 75–79 (EGACS), and Asn92. The active-site Proton acceptor is Tyr140. Position 144 (Lys144) interacts with NADP(+). Asn169 serves as a coordination point for substrate. NADP(+) is bound by residues Val170 and Lys178. Lys178 functions as the Proton acceptor in the catalytic mechanism. Residues Ser180, His187, 201 to 204 (FEGS), Arg209, and Tyr272 each bind substrate.

Belongs to the NAD(P)-dependent epimerase/dehydratase family. HldD subfamily. In terms of assembly, homopentamer. It depends on NADP(+) as a cofactor.

It catalyses the reaction ADP-D-glycero-beta-D-manno-heptose = ADP-L-glycero-beta-D-manno-heptose. It functions in the pathway nucleotide-sugar biosynthesis; ADP-L-glycero-beta-D-manno-heptose biosynthesis; ADP-L-glycero-beta-D-manno-heptose from D-glycero-beta-D-manno-heptose 7-phosphate: step 4/4. Functionally, catalyzes the interconversion between ADP-D-glycero-beta-D-manno-heptose and ADP-L-glycero-beta-D-manno-heptose via an epimerization at carbon 6 of the heptose. The sequence is that of ADP-L-glycero-D-manno-heptose-6-epimerase from Salmonella dublin (strain CT_02021853).